The primary structure comprises 210 residues: 3-hexulose-6-phosphate synthase 3 (210 aa).

The protein belongs to the HPS/KGPDC family. HPS subfamily.

It carries out the reaction D-ribulose 5-phosphate + formaldehyde = D-arabino-hex-3-ulose 6-phosphate. It participates in one-carbon metabolism; formaldehyde assimilation via RuMP pathway; D-fructose 6-phosphate from D-ribulose 5-phosphate and formaldehyde: step 1/2. Its function is as follows. Catalyzes the condensation of ribulose 5-phosphate with formaldehyde to form 3-hexulose 6-phosphate. The chain is 3-hexulose-6-phosphate synthase 3 from Staphylococcus saprophyticus subsp. saprophyticus (strain ATCC 15305 / DSM 20229 / NCIMB 8711 / NCTC 7292 / S-41).